The following is a 344-amino-acid chain: Ferrochelatase (344 aa).

H190 and E270 together coordinate Fe cation.

This sequence belongs to the ferrochelatase family.

The protein localises to the cytoplasm. It catalyses the reaction heme b + 2 H(+) = protoporphyrin IX + Fe(2+). The protein operates within porphyrin-containing compound metabolism; protoheme biosynthesis; protoheme from protoporphyrin-IX: step 1/1. Catalyzes the ferrous insertion into protoporphyrin IX. The sequence is that of Ferrochelatase from Rickettsia felis (strain ATCC VR-1525 / URRWXCal2) (Rickettsia azadi).